The chain runs to 695 residues: GRB2-associated-binding protein 1 (695 aa).

Serine 2 is subject to N-acetylserine. The region spanning 5-116 (EVVCSGWLRK…WVRCICDICG (112 aa)) is the PH domain. The segment at 204–229 (AKPTFSETDCNDNVPSHQTPASSQSK) is disordered. Residues 206-229 (PTFSETDCNDNVPSHQTPASSQSK) show a composition bias toward polar residues. Phosphoserine is present on residues serine 251, serine 253, serine 266, and serine 304. The segment at 306–387 (SYDIPPTPGN…PAGMTPSRSN (82 aa)) is disordered. Over residues 314–334 (GNTYQIPRTFPESTLGQSSKL) the composition is skewed to polar residues. Threonine 388 is modified (phosphothreonine). Phosphoserine occurs at positions 403 and 455. The interval 453–659 (PNSPPRQHSG…GSSMADERVD (207 aa)) is disordered. 2 stretches are compositionally biased toward polar residues: residues 457–466 (PRQHSGSFTE) and 605–617 (FASN…SSPM). A Phosphotyrosine modification is found at tyrosine 628. The residue at position 639 (threonine 639) is a Phosphothreonine. Serine 652 is modified (phosphoserine). Tyrosine 660 bears the Phosphotyrosine mark. Residues 671–695 (LKSTREAWTDGRQSTESETPTKNVK) form a disordered region. Over residues 673-685 (STREAWTDGRQST) the composition is skewed to basic and acidic residues. Serine 684 carries the post-translational modification Phosphoserine. The span at 686-695 (ESETPTKNVK) shows a compositional bias: polar residues.

The protein belongs to the GAB family. Identified in a complex containing FRS2, GRB2, GAB1, PIK3R1 and SOS1. Forms a tripartite complex containing GAB1, METTL13 and SPRY2. Within the complex interacts with METTL13. Interacts with GRB2 and with other SH2-containing proteins. Interacts with phosphorylated LAT2. Interacts with PTPRJ. Interacts (phosphorylated) with PTPN11. Interacts with HCK. In terms of processing, phosphorylated on tyrosine residue(s) by the epidermal growth factor receptor (EGFR) and the insulin receptor (INSR). Tyrosine phosphorylation of GAB1 mediates interaction with several proteins that contain SH2 domains. Phosphorylated on tyrosine residues by HCK upon IL6 signaling. Phosphorylated in response to FGFR1 activation. Expressed in the inner ear (at protein level). Expression is detected in the cochlear duct, spiral limbus region, efferent and afferent nerves, and in spiral ganglion neurons (at protein level).

Adapter protein that plays a role in intracellular signaling cascades triggered by activated receptor-type kinases. Plays a role in FGFR1 signaling. Probably involved in signaling by the epidermal growth factor receptor (EGFR) and the insulin receptor (INSR). Involved in the MET/HGF-signaling pathway. This chain is GRB2-associated-binding protein 1 (Gab1), found in Mus musculus (Mouse).